A 250-amino-acid chain; its full sequence is Phosphate import ATP-binding protein PstB (250 aa).

The 242-residue stretch at 4 to 245 folds into the ABC transporter domain; that stretch reads LTARDLKLSF…PRHELTEKYV (242 aa). Residue 36 to 43 coordinates ATP; sequence GPSGSGKS.

This sequence belongs to the ABC transporter superfamily. Phosphate importer (TC 3.A.1.7) family. In terms of assembly, the complex is composed of two ATP-binding proteins (PstB), two transmembrane proteins (PstC and PstA) and a solute-binding protein (PstS).

It is found in the cell membrane. It carries out the reaction phosphate(out) + ATP + H2O = ADP + 2 phosphate(in) + H(+). Functionally, part of the ABC transporter complex PstSACB involved in phosphate import. Responsible for energy coupling to the transport system. The protein is Phosphate import ATP-binding protein PstB of Pyrobaculum aerophilum (strain ATCC 51768 / DSM 7523 / JCM 9630 / CIP 104966 / NBRC 100827 / IM2).